Reading from the N-terminus, the 154-residue chain is Crossover junction endodeoxyribonuclease RuvC (154 aa).

Residues D7, E67, and D139 contribute to the active site. The Mg(2+) site is built by D7, E67, and D139.

It belongs to the RuvC family. Homodimer which binds Holliday junction (HJ) DNA. The HJ becomes 2-fold symmetrical on binding to RuvC with unstacked arms; it has a different conformation from HJ DNA in complex with RuvA. In the full resolvosome a probable DNA-RuvA(4)-RuvB(12)-RuvC(2) complex forms which resolves the HJ. Mg(2+) serves as cofactor.

The protein resides in the cytoplasm. The catalysed reaction is Endonucleolytic cleavage at a junction such as a reciprocal single-stranded crossover between two homologous DNA duplexes (Holliday junction).. Functionally, the RuvA-RuvB-RuvC complex processes Holliday junction (HJ) DNA during genetic recombination and DNA repair. Endonuclease that resolves HJ intermediates. Cleaves cruciform DNA by making single-stranded nicks across the HJ at symmetrical positions within the homologous arms, yielding a 5'-phosphate and a 3'-hydroxyl group; requires a central core of homology in the junction. The consensus cleavage sequence is 5'-(A/T)TT(C/G)-3'. Cleavage occurs on the 3'-side of the TT dinucleotide at the point of strand exchange. HJ branch migration catalyzed by RuvA-RuvB allows RuvC to scan DNA until it finds its consensus sequence, where it cleaves and resolves the cruciform DNA. This chain is Crossover junction endodeoxyribonuclease RuvC, found in Prochlorococcus marinus (strain NATL1A).